The primary structure comprises 529 residues: Nuclear distribution protein PAC1 (529 aa).

A coiled-coil region spans residues 68-89 (RLQHKIIDLEGEVSNLRTVIDS). WD repeat units follow at residues 120–159 (QSHQ…SLIP), 165–218 (AHIR…HIRT), 221–261 (GHEH…CIKT), 264–318 (GHSD…GLSL), 321–395 (GHTH…FRPH), 416–455 (GHQS…VNGR), and 496–529 (TEED…RLWS).

It belongs to the WD repeat LIS1/nudF family. Self-associates. Interacts with NDL1 and dynein.

It localises to the cytoplasm. The protein localises to the cytoskeleton. Its subcellular location is the spindle pole. Functionally, positively regulates the activity of the minus-end directed microtubule motor protein dynein. Plays a central role in positioning the mitotic spindle at the bud neck during cell division. Targets cytoplasmic dynein to microtubule plus ends, thereby promoting dynein-mediated microtubule sliding along the bud cortex and consequently the movement of the mitotic spindle to the bud neck. This is Nuclear distribution protein PAC1 from Debaryomyces hansenii (strain ATCC 36239 / CBS 767 / BCRC 21394 / JCM 1990 / NBRC 0083 / IGC 2968) (Yeast).